A 519-amino-acid polypeptide reads, in one-letter code: Cytosol aminopeptidase (519 aa).

Position 42 is a phosphoserine (Ser42). The residue at position 45 (Lys45) is an N6-succinyllysine. Ser54 is modified (phosphoserine). An N6-succinyllysine mark is found at Lys61 and Lys103. A phosphoserine mark is found at Ser180 and Ser194. Leu202 and Met203 together coordinate Zn(2+). Lys221 bears the N6-acetyllysine; alternate mark. An N6-succinyllysine; alternate modification is found at Lys221. Ser238 is modified (phosphoserine). Zn(2+) contacts are provided by Lys282 and Asp287. Residues Lys282, Asp287, Ser292, and Lys294 each coordinate substrate. A Mg(2+)-binding site is contributed by Asp287. The active site involves Lys294. The Zn(2+) site is built by Arg303, Asp305, Asp364, and Glu366. Substrate is bound by residues Asp305 and Asp364. 2 residues coordinate Mg(2+): Asp364 and Glu366. The active site involves Arg368. The residue at position 455 (Lys455) is an N6-acetyllysine; alternate. Lys455 bears the N6-succinyllysine; alternate mark. N6-succinyllysine is present on Lys476. N6-acetyllysine; alternate is present on Lys489. Lys489 bears the N6-succinyllysine; alternate mark.

The protein belongs to the peptidase M17 family. As to quaternary structure, homohexamer. It depends on Zn(2+) as a cofactor. Mn(2+) serves as cofactor.

It localises to the cytoplasm. The catalysed reaction is Release of an N-terminal amino acid, Xaa-|-Yaa-, in which Xaa is preferably Leu, but may be other amino acids including Pro although not Arg or Lys, and Yaa may be Pro. Amino acid amides and methyl esters are also readily hydrolyzed, but rates on arylamides are exceedingly low.. It catalyses the reaction an S-substituted L-cysteinylglycine + H2O = an S-substituted L-cysteine + glycine. The enzyme catalyses L-cysteinylglycine + H2O = L-cysteine + glycine. It carries out the reaction S-benzyl-L-cysteinylglycine + H2O = S-benzyl-L-cysteine + glycine. The catalysed reaction is Release of N-terminal proline from a peptide.. With respect to regulation, bimane-S-cysteinylglycine-hydrolyzing activity is inhibited by o-phenanthroline or bestatin, and is activated by the addition of zinc chloride. Cytosolic metallopeptidase that catalyzes the removal of unsubstituted N-terminal hydrophobic amino acids from various peptides. The presence of Zn(2+) ions is essential for the peptidase activity, and the association with other cofactors can modulate the substrate spectificity of the enzyme. For instance, in the presence of Mn(2+), it displays a specific Cys-Gly hydrolyzing activity of Cys-Gly-S-conjugates. Involved in the metabolism of glutathione and in the degradation of glutathione S-conjugates, which may play a role in the control of the cell redox status. This Rattus norvegicus (Rat) protein is Cytosol aminopeptidase.